Consider the following 232-residue polypeptide: Vesicle transport through interaction with t-SNAREs homolog 1B (232 aa).

The residue at position 2 (A2) is an N-acetylalanine. Interaction with CLINT1 stretches follow at residues 2–23 (ASSAASSEHFEKLHEIFRGLHE) and 69–73 (APLSF). The Cytoplasmic segment spans residues 2 to 208 (ASSAASSEHF…SRKVTTNKLL (207 aa)). The stretch at 35–98 (TAGTEEKKKL…AKLHREVRST (64 aa)) forms a coiled coil. The residue at position 103 (T103) is a Phosphothreonine. At R107 the chain carries Omega-N-methylarginine. S138 bears the Phosphoserine mark. The stretch at 161–198 (SEIIEELGEQRDQLERTKSRLVNTSENLSKSRKILRSM) forms a coiled coil. The helical; Anchor for type IV membrane protein transmembrane segment at 209–229 (LSIIILLELAILGGLVYYKFF) threads the bilayer. Residues 230 to 232 (RSH) lie on the Vesicular side of the membrane.

The protein belongs to the VTI1 family. In terms of assembly, forms a SNARE complex with STX7, STX8 and VAMP8 which functions in the homotypic fusion of late endosomes. Component of the SNARE complex composed of STX7, STX8, VAMP7 and VIT1B that is required for heterotypic fusion of late endosomes with lysosomes. May interact with STX17. Interacts with CLINT1. As to expression, expressed in all tissues examined.

Its subcellular location is the early endosome membrane. It is found in the late endosome membrane. It localises to the lysosome membrane. The protein resides in the cytoplasmic granule. The protein localises to the recycling endosome membrane. In terms of biological role, V-SNARE that mediates vesicle transport pathways through interactions with t-SNAREs on the target membrane. These interactions are proposed to mediate aspects of the specificity of vesicle trafficking and to promote fusion of the lipid bilayers. May be concerned with increased secretion of cytokines associated with cellular senescence. This is Vesicle transport through interaction with t-SNAREs homolog 1B (VTI1B) from Homo sapiens (Human).